We begin with the raw amino-acid sequence, 472 residues long: GTPase Der (472 aa).

EngA-type G domains lie at 3 to 166 (PIIA…IQNN) and 188 to 361 (IKLA…HCST). Residues 9–16 (GRPNVGKS), 56–60 (DTGGI), 118–121 (NKID), 194–201 (GSSNVGKS), 241–245 (DTAGL), and 306–309 (NKWD) contribute to the GTP site. A KH-like domain is found at 362 to 446 (KRISTALLTK…PIRIQFNEPA (85 aa)).

Belongs to the TRAFAC class TrmE-Era-EngA-EngB-Septin-like GTPase superfamily. EngA (Der) GTPase family. Associates with the 50S ribosomal subunit.

Functionally, GTPase that plays an essential role in the late steps of ribosome biogenesis. This Baumannia cicadellinicola subsp. Homalodisca coagulata protein is GTPase Der.